The primary structure comprises 192 residues: dTTP/UTP pyrophosphatase (192 aa).

Asp70 functions as the Proton acceptor in the catalytic mechanism.

The protein belongs to the Maf family. YhdE subfamily. Requires a divalent metal cation as cofactor.

The protein resides in the cytoplasm. The catalysed reaction is dTTP + H2O = dTMP + diphosphate + H(+). The enzyme catalyses UTP + H2O = UMP + diphosphate + H(+). Functionally, nucleoside triphosphate pyrophosphatase that hydrolyzes dTTP and UTP. May have a dual role in cell division arrest and in preventing the incorporation of modified nucleotides into cellular nucleic acids. The sequence is that of dTTP/UTP pyrophosphatase from Clostridium perfringens (strain SM101 / Type A).